The sequence spans 591 residues: V-type ATP synthase alpha chain (591 aa).

Position 242–249 (242–249 (GPFGAGKT)) interacts with ATP.

The protein belongs to the ATPase alpha/beta chains family.

It catalyses the reaction ATP + H2O + 4 H(+)(in) = ADP + phosphate + 5 H(+)(out). In terms of biological role, produces ATP from ADP in the presence of a proton gradient across the membrane. The V-type alpha chain is a catalytic subunit. The protein is V-type ATP synthase alpha chain of Chlamydia trachomatis serovar A (strain ATCC VR-571B / DSM 19440 / HAR-13).